We begin with the raw amino-acid sequence, 248 residues long: 4-hydroxy-tetrahydrodipicolinate reductase (248 aa).

Residues 9–14 (GAKGRV), 77–79 (GTT), and 104–107 (APNF) each bind NAD(+). H134 acts as the Proton donor/acceptor in catalysis. Residue H135 coordinates (S)-2,3,4,5-tetrahydrodipicolinate. The active-site Proton donor is K138. 144 to 145 (GT) contributes to the (S)-2,3,4,5-tetrahydrodipicolinate binding site.

It belongs to the DapB family.

It localises to the cytoplasm. The enzyme catalyses (S)-2,3,4,5-tetrahydrodipicolinate + NAD(+) + H2O = (2S,4S)-4-hydroxy-2,3,4,5-tetrahydrodipicolinate + NADH + H(+). It catalyses the reaction (S)-2,3,4,5-tetrahydrodipicolinate + NADP(+) + H2O = (2S,4S)-4-hydroxy-2,3,4,5-tetrahydrodipicolinate + NADPH + H(+). It functions in the pathway amino-acid biosynthesis; L-lysine biosynthesis via DAP pathway; (S)-tetrahydrodipicolinate from L-aspartate: step 4/4. Catalyzes the conversion of 4-hydroxy-tetrahydrodipicolinate (HTPA) to tetrahydrodipicolinate. The sequence is that of 4-hydroxy-tetrahydrodipicolinate reductase from Corynebacterium glutamicum (strain ATCC 13032 / DSM 20300 / JCM 1318 / BCRC 11384 / CCUG 27702 / LMG 3730 / NBRC 12168 / NCIMB 10025 / NRRL B-2784 / 534).